Here is a 626-residue protein sequence, read N- to C-terminus: DNA mismatch repair protein MutL (626 aa).

The protein belongs to the DNA mismatch repair MutL/HexB family.

In terms of biological role, this protein is involved in the repair of mismatches in DNA. It is required for dam-dependent methyl-directed DNA mismatch repair. May act as a 'molecular matchmaker', a protein that promotes the formation of a stable complex between two or more DNA-binding proteins in an ATP-dependent manner without itself being part of a final effector complex. In Chlorobium luteolum (strain DSM 273 / BCRC 81028 / 2530) (Pelodictyon luteolum), this protein is DNA mismatch repair protein MutL.